We begin with the raw amino-acid sequence, 371 residues long: tRNA-specific 2-thiouridylase MnmA (371 aa).

ATP is bound by residues 13 to 20 and Met-39; that span reads GMSGGVDS. Residues 99–101 are interaction with target base in tRNA; sequence NPD. Catalysis depends on Cys-104, which acts as the Nucleophile. An intrachain disulfide couples Cys-104 to Cys-200. Gly-128 contributes to the ATP binding site. Residues 150–152 form an interaction with tRNA region; sequence KDQ. Residue Cys-200 is the Cysteine persulfide intermediate of the active site. Residues 308–309 form an interaction with tRNA region; sequence RY.

It belongs to the MnmA/TRMU family.

The protein resides in the cytoplasm. The enzyme catalyses S-sulfanyl-L-cysteinyl-[protein] + uridine(34) in tRNA + AH2 + ATP = 2-thiouridine(34) in tRNA + L-cysteinyl-[protein] + A + AMP + diphosphate + H(+). Functionally, catalyzes the 2-thiolation of uridine at the wobble position (U34) of tRNA, leading to the formation of s(2)U34. This Bacillus cereus (strain ATCC 14579 / DSM 31 / CCUG 7414 / JCM 2152 / NBRC 15305 / NCIMB 9373 / NCTC 2599 / NRRL B-3711) protein is tRNA-specific 2-thiouridylase MnmA.